Reading from the N-terminus, the 160-residue chain is Probable NADH dehydrogenase [ubiquinone] 1 beta subcomplex subunit 2, mitochondrial (160 aa).

It belongs to the complex I NDUFB2 subunit family. Complex I is composed of 45 different subunits.

The protein localises to the mitochondrion inner membrane. Its function is as follows. Accessory subunit of the mitochondrial membrane respiratory chain NADH dehydrogenase (Complex I), that is believed not to be involved in catalysis. Complex I functions in the transfer of electrons from NADH to the respiratory chain. The immediate electron acceptor for the enzyme is believed to be ubiquinone. This chain is Probable NADH dehydrogenase [ubiquinone] 1 beta subcomplex subunit 2, mitochondrial, found in Caenorhabditis briggsae.